The following is a 391-amino-acid chain: Putative ABC transporter glucose-binding protein TsgA13 (391 aa).

The N-terminal stretch at 1–28 (MLDEESSIQRRDVLSALGAAGVTTLAGC) is a signal peptide. A disordered region spans residues 24–71 (TLAGCTGGDTGDTDDTEASETTASEGTTSGTTTGDVETTDGGGPSEGE). Residues 42-59 (SETTASEGTTSGTTTGDV) show a composition bias toward low complexity.

It belongs to the BMP lipoprotein family. In terms of assembly, the complex is composed of two ATP-binding proteins (TsgD13), two transmembrane proteins (TsgB13 and TsgC13) and a solute-binding protein (TsgA13).

Its function is as follows. Part of an ABC transporter complex involved in glucose import. The sequence is that of Putative ABC transporter glucose-binding protein TsgA13 (tsgA13) from Haloferax volcanii (strain ATCC 29605 / DSM 3757 / JCM 8879 / NBRC 14742 / NCIMB 2012 / VKM B-1768 / DS2) (Halobacterium volcanii).